A 226-amino-acid chain; its full sequence is Membrane protein (226 aa).

The Virion surface portion of the chain corresponds to 1-11 (MSNGSIPVDEV). A helical membrane pass occupies residues 12–32 (IEHLRNWNFTWNIILTILLVV). The Intravirion portion of the chain corresponds to 33 to 41 (LQYGHYKYS). The chain crosses the membrane as a helical span at residues 42-62 (VFLYGVKMAILWILWPLVLAL). The Virion surface portion of the chain corresponds to 63–75 (SLFDAWASFQVNW). The helical transmembrane segment at 76-96 (VFFAFSILMACITLMLWIMYF) threads the bilayer. The Intravirion portion of the chain corresponds to 97–226 (VNSIRLWRRT…TDSEKVLHLV (130 aa)). The segment at 200 to 216 (RSKHGDYSAVSNPSAVL) is interaction with N protein.

The protein belongs to the alphacoronaviruses M protein family. Homomultimer. Interacts with envelope E protein in the budding compartment of the host cell, which is located between endoplasmic reticulum and the Golgi complex. Forms a complex with HE and S proteins. Interacts with nucleocapsid N protein. This interaction probably participates in RNA packaging into the virus.

It is found in the virion membrane. The protein localises to the host Golgi apparatus membrane. In terms of biological role, component of the viral envelope that plays a central role in virus morphogenesis and assembly via its interactions with other viral proteins. The protein is Membrane protein of Sus scrofa (Pig).